A 197-amino-acid polypeptide reads, in one-letter code: Segregation and condensation protein B (197 aa).

Belongs to the ScpB family. Homodimer. Homodimerization may be required to stabilize the binding of ScpA to the Smc head domains. Component of a cohesin-like complex composed of ScpA, ScpB and the Smc homodimer, in which ScpA and ScpB bind to the head domain of Smc. The presence of the three proteins is required for the association of the complex with DNA.

It localises to the cytoplasm. Participates in chromosomal partition during cell division. May act via the formation of a condensin-like complex containing Smc and ScpA that pull DNA away from mid-cell into both cell halves. This chain is Segregation and condensation protein B, found in Syntrophotalea carbinolica (strain DSM 2380 / NBRC 103641 / GraBd1) (Pelobacter carbinolicus).